We begin with the raw amino-acid sequence, 290 residues long: N-acetylmannosamine kinase (290 aa).

ATP is bound by residues 5–12 and 132–139; these read AIDIGGTK and GVGGGVVS. The Zn(2+) site is built by histidine 156, cysteine 166, cysteine 168, and cysteine 173.

It belongs to the ROK (NagC/XylR) family. NanK subfamily. As to quaternary structure, homodimer.

The catalysed reaction is an N-acyl-D-mannosamine + ATP = an N-acyl-D-mannosamine 6-phosphate + ADP + H(+). It participates in amino-sugar metabolism; N-acetylneuraminate degradation; D-fructose 6-phosphate from N-acetylneuraminate: step 2/5. Its function is as follows. Catalyzes the phosphorylation of N-acetylmannosamine (ManNAc) to ManNAc-6-P. The sequence is that of N-acetylmannosamine kinase from Citrobacter koseri (strain ATCC BAA-895 / CDC 4225-83 / SGSC4696).